A 343-amino-acid chain; its full sequence is Glyceraldehyde-3-phosphate dehydrogenase 1 (343 aa).

Residues R13–I14, D35, R79, and S121 each bind NAD(+). D-glyceraldehyde 3-phosphate contacts are provided by residues S154–T156, T185, T214–G215, and R237. The active-site Nucleophile is the C155. N319 contacts NAD(+).

This sequence belongs to the glyceraldehyde-3-phosphate dehydrogenase family. In terms of assembly, homotetramer.

It localises to the cytoplasm. The catalysed reaction is D-glyceraldehyde 3-phosphate + phosphate + NAD(+) = (2R)-3-phospho-glyceroyl phosphate + NADH + H(+). Its pathway is carbohydrate degradation; glycolysis; pyruvate from D-glyceraldehyde 3-phosphate: step 1/5. Catalyzes the oxidative phosphorylation of glyceraldehyde 3-phosphate (G3P) to 1,3-bisphosphoglycerate (BPG) using the cofactor NAD. The first reaction step involves the formation of a hemiacetal intermediate between G3P and a cysteine residue, and this hemiacetal intermediate is then oxidized to a thioester, with concomitant reduction of NAD to NADH. The reduced NADH is then exchanged with the second NAD, and the thioester is attacked by a nucleophilic inorganic phosphate to produce BPG. In Nostoc sp. (strain PCC 7120 / SAG 25.82 / UTEX 2576), this protein is Glyceraldehyde-3-phosphate dehydrogenase 1 (gap1).